Here is a 453-residue protein sequence, read N- to C-terminus: tRNA modification GTPase MnmE (453 aa).

(6S)-5-formyl-5,6,7,8-tetrahydrofolate-binding residues include Arg22, Glu79, and Lys119. Residues 215-376 form the TrmE-type G domain; it reads GMKVVIAGRP…LKQHLKSLMG (162 aa). Asn225 is a K(+) binding site. GTP is bound by residues 225 to 230, 244 to 250, 269 to 272, and 334 to 337; these read NAGKSS, TEIAGTT, DTAG, and NKAD. Position 229 (Ser229) interacts with Mg(2+). K(+) contacts are provided by Thr244, Ile246, and Thr249. Residue Thr250 coordinates Mg(2+). A (6S)-5-formyl-5,6,7,8-tetrahydrofolate-binding site is contributed by Lys453.

This sequence belongs to the TRAFAC class TrmE-Era-EngA-EngB-Septin-like GTPase superfamily. TrmE GTPase family. In terms of assembly, homodimer. Heterotetramer of two MnmE and two MnmG subunits. K(+) is required as a cofactor.

It is found in the cytoplasm. Exhibits a very high intrinsic GTPase hydrolysis rate. Involved in the addition of a carboxymethylaminomethyl (cmnm) group at the wobble position (U34) of certain tRNAs, forming tRNA-cmnm(5)s(2)U34. The sequence is that of tRNA modification GTPase MnmE from Shewanella frigidimarina (strain NCIMB 400).